We begin with the raw amino-acid sequence, 253 residues long: 5'/3'-nucleotidase SurE (253 aa).

4 residues coordinate a divalent metal cation: aspartate 8, aspartate 9, serine 39, and asparagine 92.

Belongs to the SurE nucleotidase family. It depends on a divalent metal cation as a cofactor.

It is found in the cytoplasm. It carries out the reaction a ribonucleoside 5'-phosphate + H2O = a ribonucleoside + phosphate. The enzyme catalyses a ribonucleoside 3'-phosphate + H2O = a ribonucleoside + phosphate. It catalyses the reaction [phosphate](n) + H2O = [phosphate](n-1) + phosphate + H(+). Its function is as follows. Nucleotidase with a broad substrate specificity as it can dephosphorylate various ribo- and deoxyribonucleoside 5'-monophosphates and ribonucleoside 3'-monophosphates with highest affinity to 3'-AMP. Also hydrolyzes polyphosphate (exopolyphosphatase activity) with the preference for short-chain-length substrates (P20-25). Might be involved in the regulation of dNTP and NTP pools, and in the turnover of 3'-mononucleotides produced by numerous intracellular RNases (T1, T2, and F) during the degradation of various RNAs. The sequence is that of 5'/3'-nucleotidase SurE from Klebsiella pneumoniae (strain 342).